We begin with the raw amino-acid sequence, 326 residues long: Inactive peptidyl-prolyl cis-trans isomerase FKBP6 (326 aa).

The PPIase FKBP-type domain maps to 53–142; the sequence is DASVLVKYSG…LFEIELLDFL (90 aa). TPR repeat units follow at residues 170-203, 218-251, and 252-285; these read AATE…LHRR, LLVF…DRKN, and AKAL…QPFN.

This sequence belongs to the FKBP6 family. Interacts with HSP72/HSPA2 and CLTC. Interacts with GAPDH; leading to inhibit GAPDH catalytic activity. Interacts (via TPR repeats) with HSP90.

It is found in the cytoplasm. The protein resides in the cytosol. The protein localises to the nucleus. Its function is as follows. Co-chaperone required during spermatogenesis to repress transposable elements and prevent their mobilization, which is essential for the germline integrity. Acts via the piRNA metabolic process, which mediates the repression of transposable elements during meiosis by forming complexes composed of piRNAs and Piwi proteins and govern the methylation and subsequent repression of transposons. Acts as a co-chaperone via its interaction with HSP90 and is required for the piRNA amplification process, the secondary piRNA biogenesis. May be required together with HSP90 in removal of 16 nucleotide ping-pong by-products from Piwi complexes, possibly facilitating turnover of Piwi complexes. This is Inactive peptidyl-prolyl cis-trans isomerase FKBP6 (FKBP6) from Bos taurus (Bovine).